The primary structure comprises 53 residues: Metallocarboxypeptidase inhibitor b (53 aa).

3 cysteine pairs are disulfide-bonded: C9–C23, C15–C51, and C27–C38. A53 contributes to the Zn(2+) binding site.

Metallocarboxypeptidase inhibitor. Has an inhibitory effect on bovine CPA1 and porcine CPB1. Does not inhibit D.melanogaster svr (carboxypeptidase D). Shows no activity against serine proteases subtilisin or bovine trypsin, cysteine protease papain, and aspartyl protease porcine pepsin. This is Metallocarboxypeptidase inhibitor b from Nerita versicolor (Four-tooth nerite).